The chain runs to 373 residues: NAD(P)H-quinone oxidoreductase subunit 1 (373 aa).

A run of 8 helical transmembrane segments spans residues 28–48 (LLWL…GVLV), 98–118 (LLFT…WLII), 129–149 (VGVG…GLLM), 167–187 (AAQS…IVMM), 205–225 (ILSW…ICAL), 267–287 (VLSA…PIPV), 309–329 (SVGI…AILL), and 348–368 (FLLP…LAFP).

Belongs to the complex I subunit 1 family. NDH-1 is composed of at least 11 different subunits.

It localises to the cellular thylakoid membrane. It carries out the reaction a plastoquinone + NADH + (n+1) H(+)(in) = a plastoquinol + NAD(+) + n H(+)(out). The catalysed reaction is a plastoquinone + NADPH + (n+1) H(+)(in) = a plastoquinol + NADP(+) + n H(+)(out). In terms of biological role, NDH-1 shuttles electrons from an unknown electron donor, via FMN and iron-sulfur (Fe-S) centers, to quinones in the respiratory and/or the photosynthetic chain. The immediate electron acceptor for the enzyme in this species is believed to be plastoquinone. Couples the redox reaction to proton translocation, and thus conserves the redox energy in a proton gradient. The protein is NAD(P)H-quinone oxidoreductase subunit 1 of Parasynechococcus marenigrum (strain WH8102).